Here is an 82-residue protein sequence, read N- to C-terminus: Small ribosomal subunit protein uS17 (82 aa).

The protein belongs to the universal ribosomal protein uS17 family. Part of the 30S ribosomal subunit.

Its function is as follows. One of the primary rRNA binding proteins, it binds specifically to the 5'-end of 16S ribosomal RNA. The chain is Small ribosomal subunit protein uS17 from Aeromonas hydrophila subsp. hydrophila (strain ATCC 7966 / DSM 30187 / BCRC 13018 / CCUG 14551 / JCM 1027 / KCTC 2358 / NCIMB 9240 / NCTC 8049).